The primary structure comprises 145 residues: Acidic phospholipase A2 homolog textilotoxin C chain (145 aa).

The first 19 residues, 1-19, serve as a signal peptide directing secretion; it reads MHPAHLLVLLGVYVSLLGA. A propeptide spanning residues 20–27 is cleaved from the precursor; that stretch reads ARIPPLPL. 7 cysteine pairs are disulfide-bonded: cysteine 38/cysteine 98, cysteine 54/cysteine 144, cysteine 56/cysteine 72, cysteine 71/cysteine 125, cysteine 78/cysteine 118, cysteine 87/cysteine 111, and cysteine 105/cysteine 116.

Belongs to the phospholipase A2 family. Group I subfamily. D49 sub-subfamily. Heterohexamer. 2 forms exist: 2 A or 2 B chains, 2 C chains and 2 covalently-linked D chains, and 1 A or 1 B, 1 C, 2 covalently-linked D chains and 2 differentially glycosylated covalently-linked D chains. Textilotoxin was originally described as pentameric. In terms of tissue distribution, expressed by the venom gland.

The protein resides in the secreted. In terms of biological role, snake venom oligomeric phospholipase A2 that has potent presynaptic neurotoxicity. Chain C is not itself neurotoxic, but it is essential for the neurotoxicity of textilotoxin. Chain C possesses a very low phospholipase activity. The polypeptide is Acidic phospholipase A2 homolog textilotoxin C chain (Pseudonaja textilis (Eastern brown snake)).